The chain runs to 189 residues: Pyridoxal 5'-phosphate synthase subunit PdxT (189 aa).

Gly48–Ser50 provides a ligand contact to L-glutamine. The active-site Nucleophile is Cys80. L-glutamine contacts are provided by residues Arg107 and Ile136–Arg137. Catalysis depends on charge relay system residues His172 and Glu174.

It belongs to the glutaminase PdxT/SNO family. In terms of assembly, in the presence of PdxS, forms a dodecamer of heterodimers. Only shows activity in the heterodimer.

The catalysed reaction is aldehydo-D-ribose 5-phosphate + D-glyceraldehyde 3-phosphate + L-glutamine = pyridoxal 5'-phosphate + L-glutamate + phosphate + 3 H2O + H(+). It catalyses the reaction L-glutamine + H2O = L-glutamate + NH4(+). It participates in cofactor biosynthesis; pyridoxal 5'-phosphate biosynthesis. In terms of biological role, catalyzes the hydrolysis of glutamine to glutamate and ammonia as part of the biosynthesis of pyridoxal 5'-phosphate. The resulting ammonia molecule is channeled to the active site of PdxS. The polypeptide is Pyridoxal 5'-phosphate synthase subunit PdxT (Ruminiclostridium cellulolyticum (strain ATCC 35319 / DSM 5812 / JCM 6584 / H10) (Clostridium cellulolyticum)).